The following is a 229-amino-acid chain: Uracil-DNA glycosylase (229 aa).

Catalysis depends on Asp-64, which acts as the Proton acceptor.

This sequence belongs to the uracil-DNA glycosylase (UDG) superfamily. UNG family.

The protein resides in the cytoplasm. It carries out the reaction Hydrolyzes single-stranded DNA or mismatched double-stranded DNA and polynucleotides, releasing free uracil.. Functionally, excises uracil residues from the DNA which can arise as a result of misincorporation of dUMP residues by DNA polymerase or due to deamination of cytosine. The polypeptide is Uracil-DNA glycosylase (Escherichia coli O7:K1 (strain IAI39 / ExPEC)).